Reading from the N-terminus, the 273-residue chain is Putative phosphoenolpyruvate synthase regulatory protein (273 aa).

Ala-153–Thr-160 contributes to the ADP binding site.

It belongs to the pyruvate, phosphate/water dikinase regulatory protein family. PSRP subfamily.

The catalysed reaction is [pyruvate, water dikinase] + ADP = [pyruvate, water dikinase]-phosphate + AMP + H(+). It carries out the reaction [pyruvate, water dikinase]-phosphate + phosphate + H(+) = [pyruvate, water dikinase] + diphosphate. Bifunctional serine/threonine kinase and phosphorylase involved in the regulation of the phosphoenolpyruvate synthase (PEPS) by catalyzing its phosphorylation/dephosphorylation. This Xylella fastidiosa (strain 9a5c) protein is Putative phosphoenolpyruvate synthase regulatory protein.